A 503-amino-acid chain; its full sequence is Pre-glycoprotein polyprotein GP complex (503 aa).

Gly2 carries the N-myristoyl glycine; by host lipid modification. The Extracellular portion of the chain corresponds to 2–17 (GQIVTLIQSIPEVLQE). Residues 18 to 33 (VFNVALIIVSVLCIVK) traverse the membrane as a helical segment. Topologically, residues 34 to 58 (GFVNLMRCGLFQLVTFLILSGRSCD) are cytoplasmic. Cys57 is a binding site for Zn(2+). Residues 59-446 (SMMIDRRHNL…QGKTPLALTD (388 aa)) are Extracellular-facing. 4 disulfide bridges follow: Cys86/Cys248, Cys293/Cys306, Cys315/Cys324, and Cys378/Cys399. Asn89, Asn111, Asn181, and Asn241 each carry an N-linked (GlcNAc...) asparagine; by host glycan. N-linked (GlcNAc...) asparagine; by host glycosylation is found at Asn379, Asn387, Asn404, and Asn409. The helical transmembrane segment at 447–467 (ICFWSLVFYTITVFLHIVGIP) threads the bilayer. Residues 468–503 (THRHIIGDGCPKPHRITRNSLCSCGYYKYQRNLTNG) lie on the Cytoplasmic side of the membrane. The Zn(2+) site is built by His469, His471, Cys477, His481, Cys489, and Cys491.

It belongs to the arenaviridae GPC protein family. Interacts with glycoprotein G2. Part of the GP complex (GP-C) together with glycoprotein G1 and glycoprotein G2. The GP-complex interacts with protein Z, which interacts with ribonucleocapsid; these interactions may induce virion budding. In terms of assembly, homotrimer; disulfide-linked. In pre-fusion state, G1 homotrimers bind G2 homotrimers via ionic interactions. Part of the GP complex (GP-C) together with glycoprotein G2 and the stable signal peptide. The GP-complex interacts with protein Z, which interacts with ribonucleocapsid; these interactions may induce virion budding. As to quaternary structure, homotrimer. Interacts with the stable signal peptide. In pre-fusion state, G2 homotrimers bind G1 homotrimers via ionic interactions. Part of the GP complex (GP-C) together with glycoprotein G1 and the stable signal peptide. Acidification in the endosome triggers rearrangements, which ultimately leads to a 6 helix bundle formed by the two heptad repeat domains (HR1 and HR2) in post-fusion state. The GP-complex interacts with protein Z, which interacts with ribonucleocapsid; these interactions may induce virion budding. In terms of processing, specific enzymatic cleavages in vivo yield mature proteins. GP-C polyprotein is cleaved in the endoplasmic reticulum by the host protease MBTPS1. Only cleaved glycoprotein is incorporated into virions. Post-translationally, the SSP remains stably associated with the GP complex following cleavage by signal peptidase and plays crucial roles in the trafficking of GP through the secretory pathway. Myristoylation is necessary for GP2-mediated fusion activity.

It localises to the virion membrane. It is found in the host endoplasmic reticulum membrane. The protein resides in the host Golgi apparatus membrane. The protein localises to the host cell membrane. In terms of biological role, functions as a cleaved signal peptide that is retained as the third component of the GP complex (GP-C). Helps to stabilize the spike complex in its native conformation. The SSP is required for efficient glycoprotein expression, post-translational maturation cleavage of G1 and G2, glycoprotein transport to the cell surface plasma membrane, formation of infectious virus particles, and acid pH-dependent glycoprotein-mediated cell fusion. Functionally, forms the virion spikes together with glycoprotein G2. The glycoprotein spike trimers are connected to the underlying matrix. Interacts with the host receptor leading to virus endocytosis. Its function is as follows. Forms the virion spikes together with glycoprotein G1. The glycoprotein spike trimers are connected to the underlying matrix. Class I viral fusion protein that directs fusion of viral and host endosomal membranes, leading to delivery of the nucleocapsid into the cytoplasm. Membrane fusion is mediated by irreversible conformational changes induced by acidification. In Cavia cutleri (Guinea pig), this protein is Pre-glycoprotein polyprotein GP complex.